The chain runs to 208 residues: Imidazoleglycerol-phosphate dehydratase (208 aa).

It belongs to the imidazoleglycerol-phosphate dehydratase family.

It is found in the cytoplasm. The enzyme catalyses D-erythro-1-(imidazol-4-yl)glycerol 3-phosphate = 3-(imidazol-4-yl)-2-oxopropyl phosphate + H2O. It participates in amino-acid biosynthesis; L-histidine biosynthesis; L-histidine from 5-phospho-alpha-D-ribose 1-diphosphate: step 6/9. The sequence is that of Imidazoleglycerol-phosphate dehydratase from Mycobacterium sp. (strain JLS).